Here is a 328-residue protein sequence, read N- to C-terminus: D-cysteine desulfhydrase (328 aa).

The residue at position 51 (lysine 51) is an N6-(pyridoxal phosphate)lysine.

Belongs to the ACC deaminase/D-cysteine desulfhydrase family. Homodimer. Pyridoxal 5'-phosphate serves as cofactor.

The catalysed reaction is D-cysteine + H2O = hydrogen sulfide + pyruvate + NH4(+) + H(+). Functionally, catalyzes the alpha,beta-elimination reaction of D-cysteine and of several D-cysteine derivatives. It could be a defense mechanism against D-cysteine. This chain is D-cysteine desulfhydrase, found in Salmonella paratyphi C (strain RKS4594).